Here is a 224-residue protein sequence, read N- to C-terminus: Paired immunoglobulin-like type 2 receptor beta (224 aa).

The N-terminal stretch at 1 to 28 is a signal peptide; it reads MALLISLPGGTPAMAQVLLLLSSGCLHA. At 29 to 195 the chain is on the extracellular side; it reads GNSERYNRKN…NPSLMNLGAM (167 aa). N-linked (GlcNAc...) asparagine glycans are attached at residues asparagine 90, asparagine 107, and asparagine 154. The helical transmembrane segment at 196 to 216 threads the bilayer; the sequence is VTMLLAKVLVIVLVYGWMIFL. Topologically, residues 217 to 224 are cytoplasmic; that stretch reads RWKQRPAH.

As to quaternary structure, interacts with CD99. Probably associates with DAP12. In terms of tissue distribution, widely expressed with highest levels in spleen, liver and lung. Predominantly expressed by natural killer cells, macrophages, and granulocytes and dendritic cells (BM-DC).

The protein resides in the membrane. Functionally, paired receptors consist of highly related activating and inhibitory receptors and are widely involved in the regulation of the immune system. PILRB is thought to act as a cellular signaling activating receptor that associates with ITAM-bearing adapter molecules on the cell surface. Seems to associate with DAP12 and is a receptor for CD99. May be involved in target cell recognition by natural killer cells and in activation of dendritic cells. This is Paired immunoglobulin-like type 2 receptor beta (Pilrb) from Mus musculus (Mouse).